The primary structure comprises 1845 residues: Histone-lysine N-methyltransferase, H3 lysine-79 specific (1845 aa).

Over residues 1-44 (MSTNSTPRKQKLSNSKSLQNSPISPTVKKTNSFPLGNNIPTNIN) the composition is skewed to polar residues. Disordered regions lie at residues 1-67 (MSTN…NGIG), 83-306 (PPLP…NKWT), 450-470 (SHDI…NKNK), 486-571 (QKLK…TERK), 585-681 (RKER…NDSY), 741-767 (GETF…KKIE), 862-881 (QTTK…AETE), and 963-1102 (KDNP…SNSL). Low complexity-rich tracts occupy residues 52–67 (NNSN…NGIG), 90–162 (SSSS…QQEP), 191–226 (PSTP…SNNS), and 239–263 (NNNN…NNNN). Acidic residues predominate over residues 268–280 (VIDDDDDDDDDEG). The segment covering 282 to 294 (SIKSTHTSTQSTP) has biased composition (polar residues). Basic and acidic residues predominate over residues 295 to 304 (IRDRRQRDNK). The segment covering 453–464 (INNNNNNNNNNK) has biased composition (low complexity). Positions 585–679 (RKERERKERK…IEKERREKND (95 aa)) are enriched in basic and acidic residues. Residues 625 to 639 (KKKEKEKEKEKEKEK) are required for interaction with nucleosomes and DNA. Low complexity-rich tracts occupy residues 750–763 (NNNN…NNNN), 862–877 (QTTK…TTTT), 972–1011 (NNNR…RNNN), and 1020–1067 (NNNN…NNTI). Residues 1069–1080 (KKIETIKKDINK) are compositionally biased toward basic and acidic residues. The segment covering 1084–1102 (KTTTTTSSSSSSTSSSNSL) has biased composition (low complexity). In terms of domain architecture, DOT1 spans 1125-1446 (FDVGIGVPVT…KDSDIVTDQT (322 aa)). S-adenosyl-L-methionine-binding positions include 1251-1254 (YGEA), 1274-1283 (FCDIGCGIGN), and Glu-1300. 5 disordered regions span residues 1463–1559 (LQLF…NKPI), 1610–1661 (RISP…SSND), 1735–1762 (HQKS…KKEQ), 1772–1791 (NYNN…NHNN), and 1799–1845 (TDLI…DNNK). Low complexity-rich tracts occupy residues 1467–1522 (SSSS…TPNS), 1541–1556 (NNNN…NSNN), and 1610–1642 (RISP…SSSD). Acidic residues predominate over residues 1643–1656 (NENDDDNGDDEDDS). Basic residues predominate over residues 1745–1759 (RLSRKQKKLAKKNKK). Low complexity-rich tracts occupy residues 1799–1817 (TDLI…INND) and 1835–1845 (KDYNNINDNNK).

This sequence belongs to the class I-like SAM-binding methyltransferase superfamily. DOT1 family.

It is found in the nucleus. The catalysed reaction is L-lysyl(79)-[histone H3] + 3 S-adenosyl-L-methionine = N(6),N(6),N(6)-trimethyl-L-lysyl(79)-[histone H3] + 3 S-adenosyl-L-homocysteine + 3 H(+). In terms of biological role, histone methyltransferase that specifically methylates histone H3 to form H3K79me. This methylation is required for telomere silencing, correct growth and development, and for resistance to DNA damage induced by UV LIGHT. This chain is Histone-lysine N-methyltransferase, H3 lysine-79 specific, found in Dictyostelium discoideum (Social amoeba).